A 351-amino-acid polypeptide reads, in one-letter code: Translation initiation factor eIF2B subunit beta (351 aa).

This sequence belongs to the eIF-2B alpha/beta/delta subunits family. Component of the translation initiation factor 2B (eIF2B) complex which is a heterodecamer of two sets of five different subunits: alpha, beta, gamma, delta and epsilon. Subunits alpha, beta and delta comprise a regulatory subcomplex and subunits epsilon and gamma comprise a catalytic subcomplex. Within the complex, the hexameric regulatory complex resides at the center, with the two heterodimeric catalytic subcomplexes bound on opposite sides.

It is found in the cytoplasm. The protein localises to the cytosol. With respect to regulation, activated by the chemical integrated stress response (ISR) inhibitor ISRIB which stimulates guanine nucleotide exchange factor activity for both phosphorylated and unphosphorylated eIF2. Its function is as follows. Acts as a component of the translation initiation factor 2B (eIF2B) complex, which catalyzes the exchange of GDP for GTP on eukaryotic initiation factor 2 (eIF2) gamma subunit. Its guanine nucleotide exchange factor activity is repressed when bound to eIF2 complex phosphorylated on the alpha subunit, thereby limiting the amount of methionyl-initiator methionine tRNA available to the ribosome and consequently global translation is repressed. In Homo sapiens (Human), this protein is Translation initiation factor eIF2B subunit beta (EIF2B2).